Here is a 108-residue protein sequence, read N- to C-terminus: UPF0060 membrane protein DSY4157 (108 aa).

A run of 4 helical transmembrane segments spans residues Ile6–Leu26, Pro31–Leu51, Val60–Asp80, and Thr86–Pro106.

It belongs to the UPF0060 family.

The protein resides in the cell membrane. This is UPF0060 membrane protein DSY4157 from Desulfitobacterium hafniense (strain Y51).